Reading from the N-terminus, the 266-residue chain is Thiazole synthase (266 aa).

K107 acts as the Schiff-base intermediate with DXP in catalysis. Residues G168, 194–195 (AG), and 216–217 (NT) contribute to the 1-deoxy-D-xylulose 5-phosphate site.

Belongs to the ThiG family. In terms of assembly, homotetramer. Forms heterodimers with either ThiH or ThiS.

It is found in the cytoplasm. The enzyme catalyses [ThiS sulfur-carrier protein]-C-terminal-Gly-aminoethanethioate + 2-iminoacetate + 1-deoxy-D-xylulose 5-phosphate = [ThiS sulfur-carrier protein]-C-terminal Gly-Gly + 2-[(2R,5Z)-2-carboxy-4-methylthiazol-5(2H)-ylidene]ethyl phosphate + 2 H2O + H(+). Its pathway is cofactor biosynthesis; thiamine diphosphate biosynthesis. Its function is as follows. Catalyzes the rearrangement of 1-deoxy-D-xylulose 5-phosphate (DXP) to produce the thiazole phosphate moiety of thiamine. Sulfur is provided by the thiocarboxylate moiety of the carrier protein ThiS. In vitro, sulfur can be provided by H(2)S. The polypeptide is Thiazole synthase (Azorhizobium caulinodans (strain ATCC 43989 / DSM 5975 / JCM 20966 / LMG 6465 / NBRC 14845 / NCIMB 13405 / ORS 571)).